Consider the following 547-residue polypeptide: Chaperonin GroEL 1 (547 aa).

ATP contacts are provided by residues 30–33 (TLGP), Lys-51, 87–91 (DGTTT), Gly-415, and Asp-496. The tract at residues 525–547 (KPEPKSPAGGPGMGGMGGMDGMM) is disordered. A compositionally biased stretch (gly residues) spans 533 to 547 (GGPGMGGMGGMDGMM).

It belongs to the chaperonin (HSP60) family. Forms a cylinder of 14 subunits composed of two heptameric rings stacked back-to-back. Interacts with the co-chaperonin GroES.

The protein localises to the cytoplasm. It carries out the reaction ATP + H2O + a folded polypeptide = ADP + phosphate + an unfolded polypeptide.. In terms of biological role, together with its co-chaperonin GroES, plays an essential role in assisting protein folding. The GroEL-GroES system forms a nano-cage that allows encapsulation of the non-native substrate proteins and provides a physical environment optimized to promote and accelerate protein folding. The chain is Chaperonin GroEL 1 from Cereibacter sphaeroides (strain ATCC 17023 / DSM 158 / JCM 6121 / CCUG 31486 / LMG 2827 / NBRC 12203 / NCIMB 8253 / ATH 2.4.1.) (Rhodobacter sphaeroides).